The primary structure comprises 81 residues: Carboxysome shell vertex protein CsoS4B (81 aa).

Residues 1-77 (MEVMRVRSDL…TDLTIGGIID (77 aa)) enclose the BMV domain.

This sequence belongs to the CcmL/EutN family. CsoS4 subfamily. Homopentamer.

The protein resides in the carboxysome. In terms of biological role, probably forms vertices in the carboxysome. Has been modeled to induce curvature upon insertion into an otherwise flat hexagonal layer of major carboxysome subunits. A minor shell protein, only 12 pentamers of CsoS4A/CsoS4B are calculated to be present in each carboxysome. The 2 CsoS4 proteins contribute to the impermeability of the carboxysome to CO(2). Its central pore is probably too small to allow passage of metabolites; its function might be to anchor different proteins or metabolites to the carboxysome. Its function is as follows. Unlike beta-carboxysomes, alpha-carboxysomes (Cb) can form without cargo protein. CsoS2 is essential for Cb formation and is also capable of targeting foreign proteins to the Cb. The Cb shell assembles with the aid of CsoS2; CsoS1A, CsoS1B and CsoS1C form the majority of the shell while CsoS4A and CsoS4B form vertices. CsoS1D forms pseudohexamers that probably control metabolite flux into and out of the shell. This is Carboxysome shell vertex protein CsoS4B from Halothiobacillus neapolitanus (strain ATCC 23641 / c2) (Thiobacillus neapolitanus).